A 508-amino-acid polypeptide reads, in one-letter code: Photosystem II CP47 reaction center protein (508 aa).

Transmembrane regions (helical) follow at residues 21-36, 101-115, 140-156, 203-218, 237-252, and 457-472; these read SVHIMHTALVAGWAGS, IAFSGLCFLAAIWHW, GIHLFLSGVACFGFGAF, IAAGTLGILAGLFHLS, VLSSSIAAVFFAAFVV, and SFALLFFFGHIWHGAR.

This sequence belongs to the PsbB/PsbC family. PsbB subfamily. PSII is composed of 1 copy each of membrane proteins PsbA, PsbB, PsbC, PsbD, PsbE, PsbF, PsbH, PsbI, PsbJ, PsbK, PsbL, PsbM, PsbT, PsbX, PsbY, PsbZ, Psb30/Ycf12, at least 3 peripheral proteins of the oxygen-evolving complex and a large number of cofactors. It forms dimeric complexes. Binds multiple chlorophylls. PSII binds additional chlorophylls, carotenoids and specific lipids. is required as a cofactor.

It is found in the plastid membrane. One of the components of the core complex of photosystem II (PSII). It binds chlorophyll and helps catalyze the primary light-induced photochemical processes of PSII. PSII is a light-driven water:plastoquinone oxidoreductase, using light energy to abstract electrons from H(2)O, generating O(2) and a proton gradient subsequently used for ATP formation. The chain is Photosystem II CP47 reaction center protein from Cuscuta reflexa (Southern Asian dodder).